Reading from the N-terminus, the 121-residue chain is Large ribosomal subunit protein uL14 (121 aa).

This sequence belongs to the universal ribosomal protein uL14 family. As to quaternary structure, part of the 50S ribosomal subunit. Forms a cluster with proteins L3 and L19. In the 70S ribosome, L14 and L19 interact and together make contacts with the 16S rRNA in bridges B5 and B8.

Binds to 23S rRNA. Forms part of two intersubunit bridges in the 70S ribosome. The protein is Large ribosomal subunit protein uL14 of Hydrogenobaculum sp. (strain Y04AAS1).